The primary structure comprises 323 residues: tRNA-dihydrouridine(20/20a) synthase (323 aa).

FMN contacts are provided by residues 14–16 and glutamine 66; that span reads PML. Residue cysteine 96 is the Proton donor of the active site. FMN is bound by residues lysine 135, histidine 166, 206–208, and 228–229; these read NGG and GR.

This sequence belongs to the Dus family. DusA subfamily. Requires FMN as cofactor.

The enzyme catalyses 5,6-dihydrouridine(20) in tRNA + NADP(+) = uridine(20) in tRNA + NADPH + H(+). The catalysed reaction is 5,6-dihydrouridine(20) in tRNA + NAD(+) = uridine(20) in tRNA + NADH + H(+). It catalyses the reaction 5,6-dihydrouridine(20a) in tRNA + NADP(+) = uridine(20a) in tRNA + NADPH + H(+). It carries out the reaction 5,6-dihydrouridine(20a) in tRNA + NAD(+) = uridine(20a) in tRNA + NADH + H(+). In terms of biological role, catalyzes the synthesis of 5,6-dihydrouridine (D), a modified base found in the D-loop of most tRNAs, via the reduction of the C5-C6 double bond in target uridines. Specifically modifies U20 and U20a in tRNAs. The polypeptide is tRNA-dihydrouridine(20/20a) synthase (Haemophilus ducreyi (strain 35000HP / ATCC 700724)).